A 352-amino-acid polypeptide reads, in one-letter code: Fe(3+) ions import ATP-binding protein FbpC 1 (352 aa).

One can recognise an ABC transporter domain in the interval 11-241 (VELKHITKRF…PASRFMASFM (231 aa)). Residue 43-50 (GPSGCGKT) participates in ATP binding.

It belongs to the ABC transporter superfamily. Fe(3+) ion importer (TC 3.A.1.10) family. The complex is composed of two ATP-binding proteins (FbpC), two transmembrane proteins (FbpB) and a solute-binding protein (FbpA).

The protein localises to the cell inner membrane. It carries out the reaction Fe(3+)(out) + ATP + H2O = Fe(3+)(in) + ADP + phosphate + H(+). In terms of biological role, part of the ABC transporter complex FbpABC involved in Fe(3+) ions import. Responsible for energy coupling to the transport system. This chain is Fe(3+) ions import ATP-binding protein FbpC 1, found in Pectobacterium atrosepticum (strain SCRI 1043 / ATCC BAA-672) (Erwinia carotovora subsp. atroseptica).